The chain runs to 682 residues: uncharacterized protein (682 aa).

This is an uncharacterized protein from Saccharomyces cerevisiae (strain ATCC 204508 / S288c) (Baker's yeast).